A 78-amino-acid chain; its full sequence is MTRHLIFAAVLLVCLFVCWNAIGAQDARSAFSSEETAQDQHVMEERIFINPAGNREKNACLENCRSSPNCKNYEFCSK.

Residues 1–24 (MTRHLIFAAVLLVCLFVCWNAIGA) form the signal peptide. Positions 25–28 (QDAR) are excised as a propeptide.

Belongs to the scoloptoxin-04 family. Contains 2 disulfide bonds. In terms of tissue distribution, expressed by the venom gland.

It localises to the secreted. The protein is U-scoloptoxin(04)-Er1a of Ethmostigmus rubripes (Giant centipede).